Consider the following 213-residue polypeptide: Putative manganese efflux pump MntP (213 aa).

The next 7 membrane-spanning stretches (helical) occupy residues 6-26, 34-54, 58-78, 107-127, 132-152, 153-173, and 192-212; these read LGVL…GIGM, AFML…FGIL, ALGL…LFFL, GSGG…LFAP, LVVI…SLGT, VGAQ…IMTV, and LAGG…SASP.

Belongs to the MntP (TC 9.B.29) family.

It is found in the cell membrane. Functionally, probably functions as a manganese efflux pump. The chain is Putative manganese efflux pump MntP from Heliobacterium modesticaldum (strain ATCC 51547 / Ice1).